The following is a 404-amino-acid chain: Probable tRNA sulfurtransferase (404 aa).

In terms of domain architecture, THUMP spans 60-165 (HEVAESLKEI…DEAAYISYEN (106 aa)). Residues 183 to 184 (ML), 208 to 209 (HF), arginine 265, glycine 287, and glutamine 296 contribute to the ATP site.

The protein belongs to the ThiI family.

Its subcellular location is the cytoplasm. The catalysed reaction is [ThiI sulfur-carrier protein]-S-sulfanyl-L-cysteine + a uridine in tRNA + 2 reduced [2Fe-2S]-[ferredoxin] + ATP + H(+) = [ThiI sulfur-carrier protein]-L-cysteine + a 4-thiouridine in tRNA + 2 oxidized [2Fe-2S]-[ferredoxin] + AMP + diphosphate. The enzyme catalyses [ThiS sulfur-carrier protein]-C-terminal Gly-Gly-AMP + S-sulfanyl-L-cysteinyl-[cysteine desulfurase] + AH2 = [ThiS sulfur-carrier protein]-C-terminal-Gly-aminoethanethioate + L-cysteinyl-[cysteine desulfurase] + A + AMP + 2 H(+). It participates in cofactor biosynthesis; thiamine diphosphate biosynthesis. Functionally, catalyzes the ATP-dependent transfer of a sulfur to tRNA to produce 4-thiouridine in position 8 of tRNAs, which functions as a near-UV photosensor. Also catalyzes the transfer of sulfur to the sulfur carrier protein ThiS, forming ThiS-thiocarboxylate. This is a step in the synthesis of thiazole, in the thiamine biosynthesis pathway. The sulfur is donated as persulfide by IscS. This is Probable tRNA sulfurtransferase from Streptococcus agalactiae serotype Ia (strain ATCC 27591 / A909 / CDC SS700).